The chain runs to 220 residues: Thiamine-phosphate synthase (220 aa).

4-amino-2-methyl-5-(diphosphooxymethyl)pyrimidine contacts are provided by residues 47–51 and asparagine 78; that span reads QYREK. Mg(2+) is bound by residues aspartate 79 and aspartate 98. Serine 117 serves as a coordination point for 4-amino-2-methyl-5-(diphosphooxymethyl)pyrimidine. Residue 143–145 coordinates 2-[(2R,5Z)-2-carboxy-4-methylthiazol-5(2H)-ylidene]ethyl phosphate; sequence TAT. A 4-amino-2-methyl-5-(diphosphooxymethyl)pyrimidine-binding site is contributed by lysine 146. Residues glycine 174 and 194–195 contribute to the 2-[(2R,5Z)-2-carboxy-4-methylthiazol-5(2H)-ylidene]ethyl phosphate site; that span reads IS.

Belongs to the thiamine-phosphate synthase family. The cofactor is Mg(2+).

It carries out the reaction 2-[(2R,5Z)-2-carboxy-4-methylthiazol-5(2H)-ylidene]ethyl phosphate + 4-amino-2-methyl-5-(diphosphooxymethyl)pyrimidine + 2 H(+) = thiamine phosphate + CO2 + diphosphate. The catalysed reaction is 2-(2-carboxy-4-methylthiazol-5-yl)ethyl phosphate + 4-amino-2-methyl-5-(diphosphooxymethyl)pyrimidine + 2 H(+) = thiamine phosphate + CO2 + diphosphate. It catalyses the reaction 4-methyl-5-(2-phosphooxyethyl)-thiazole + 4-amino-2-methyl-5-(diphosphooxymethyl)pyrimidine + H(+) = thiamine phosphate + diphosphate. It participates in cofactor biosynthesis; thiamine diphosphate biosynthesis; thiamine phosphate from 4-amino-2-methyl-5-diphosphomethylpyrimidine and 4-methyl-5-(2-phosphoethyl)-thiazole: step 1/1. Condenses 4-methyl-5-(beta-hydroxyethyl)thiazole monophosphate (THZ-P) and 2-methyl-4-amino-5-hydroxymethyl pyrimidine pyrophosphate (HMP-PP) to form thiamine monophosphate (TMP). In Methanosarcina barkeri (strain Fusaro / DSM 804), this protein is Thiamine-phosphate synthase.